Reading from the N-terminus, the 454-residue chain is CBL-interacting protein kinase 33 (454 aa).

In terms of domain architecture, Protein kinase spans 13–268 (YELGRTIGEG…IPEILEDEWF (256 aa)). ATP contacts are provided by residues 19–27 (IGEGTFAKV) and Lys-42. Asp-136 acts as the Proton acceptor in catalysis. Residues 154-183 (DFGLSALSQQIKDDGLLHTTCGTPNYVAPE) form an activation loop region. Positions 305–329 (EEPEALNAFELISMSAGLNLGNLFD) constitute an NAF domain. Residues 335–364 (KRETRFTSKCPPKEIVRKIEEAAKPLGFDV) are PPI.

Belongs to the protein kinase superfamily. CAMK Ser/Thr protein kinase family. SNF1 subfamily. Requires Mn(2+) as cofactor.

The enzyme catalyses L-seryl-[protein] + ATP = O-phospho-L-seryl-[protein] + ADP + H(+). It carries out the reaction L-threonyl-[protein] + ATP = O-phospho-L-threonyl-[protein] + ADP + H(+). CIPK serine-threonine protein kinases interact with CBL proteins. Binding of a CBL protein to the regulatory NAF domain of CIPK protein lead to the activation of the kinase in a calcium-dependent manner. This Oryza sativa subsp. japonica (Rice) protein is CBL-interacting protein kinase 33 (CIPK33).